The chain runs to 238 residues: MNPEQFKTALAEKGIELSATQMKQFHDYFEMLVEWNEKMNLTAITDEKEVYLKHFYDSISATFYVDFTSFDSICDVGAGAGFPSIPIKICFPHLKVSIVDSLKKRMTFLDALAEKLGLTDVHFYHDRAETFGQNKAHREKYDLVTARAVARMSVLAELCIPLVKKGGSFLVMKAAQAEQELQIAEKAIKLFGGKVVDHFSFLLPVEESERNIYVINKTKETPNKYPRKPGTPNKLPIE.

S-adenosyl-L-methionine is bound by residues G77, F82, 128-129, and R147; that span reads AE.

Belongs to the methyltransferase superfamily. RNA methyltransferase RsmG family.

It localises to the cytoplasm. In terms of biological role, specifically methylates the N7 position of guanine in position 535 of 16S rRNA. In Listeria welshimeri serovar 6b (strain ATCC 35897 / DSM 20650 / CCUG 15529 / CIP 8149 / NCTC 11857 / SLCC 5334 / V8), this protein is Ribosomal RNA small subunit methyltransferase G.